Reading from the N-terminus, the 448-residue chain is ATP-dependent protease ATPase subunit HslU (448 aa).

ATP contacts are provided by residues V21, 63–68, D260, E326, and R398; that span reads GVGKTE.

Belongs to the ClpX chaperone family. HslU subfamily. A double ring-shaped homohexamer of HslV is capped on each side by a ring-shaped HslU homohexamer. The assembly of the HslU/HslV complex is dependent on binding of ATP.

The protein localises to the cytoplasm. In terms of biological role, ATPase subunit of a proteasome-like degradation complex; this subunit has chaperone activity. The binding of ATP and its subsequent hydrolysis by HslU are essential for unfolding of protein substrates subsequently hydrolyzed by HslV. HslU recognizes the N-terminal part of its protein substrates and unfolds these before they are guided to HslV for hydrolysis. The chain is ATP-dependent protease ATPase subunit HslU from Sulfurihydrogenibium sp. (strain YO3AOP1).